Here is a 264-residue protein sequence, read N- to C-terminus: Glutamate racemase (264 aa).

Substrate contacts are provided by residues 11–12 (DS) and 43–44 (YG). The active-site Proton donor/acceptor is Cys-74. 75–76 (NT) contributes to the substrate binding site. The active-site Proton donor/acceptor is the Cys-193. 194 to 195 (TH) serves as a coordination point for substrate.

Belongs to the aspartate/glutamate racemases family.

The catalysed reaction is L-glutamate = D-glutamate. It participates in cell wall biogenesis; peptidoglycan biosynthesis. Its function is as follows. Provides the (R)-glutamate required for cell wall biosynthesis. In Bifidobacterium longum subsp. infantis (strain ATCC 15697 / DSM 20088 / JCM 1222 / NCTC 11817 / S12), this protein is Glutamate racemase.